The sequence spans 448 residues: Fibulin-5 (448 aa).

The first 23 residues, 1 to 23 (MPGIKRILTVTILALCLPSPGNA), serve as a signal peptide directing secretion. Residues 42-82 (DIDECRTIPEACRGDMMCVNQNGRYLCIPRTNPVYRGPYSN) form the EGF-like 1; calcium-binding domain. Disulfide bonds link C46/C59, C53/C68, C131/C144, C138/C153, C155/C166, C172/C181, C177/C190, C192/C205, C211/C221, C217/C230, C232/C245, C251/C262, C258/C271, C273/C286, C292/C305, C299/C314, and C320/C332. The Cell attachment site signature appears at 54–56 (RGD). The EGF-like 2; calcium-binding domain maps to 127–167 (DVDECATDSHQCNPTQICINTEGGYTCSCTDGYWLLEGQCL). One can recognise an EGF-like 3; calcium-binding domain in the interval 168 to 206 (DIDECRYGYCQQLCANVPGSYSCTCNPGFTLNEDGRSCQ). The EGF-like 4; calcium-binding domain maps to 207 to 246 (DVNECATENPCVQTCVNTYGSFICRCDPGYELEEDGVHCS). Positions 245–448 (CSDMDECSFS…LRIYVSQYPF (204 aa)) are interaction with LOXL1. In terms of domain architecture, EGF-like 5; calcium-binding spans 247–287 (DMDECSFSEFLCQHECVNQPGTYFCSCPPGYILLDDNRSCQ). 2 N-linked (GlcNAc...) asparagine glycosylation sites follow: N283 and N296. In terms of domain architecture, EGF-like 6; calcium-binding spans 288–333 (DINECEHRNHTCNLQQTCYNLQGGFKCIDPIRCEEPYLRISDNRCM).

Belongs to the fibulin family. As to quaternary structure, homodimer. Monomer, homodimerizes in presence of Ca(2+). Interacts with ELN. Interacts (via N-terminus) with the integrins ITGAV/ITGB3, ITGAV/ITGB5 and ITGA9/ITGB1. Interacts with FBN1 (via N-terminal domain). Forms a ternary complex with ELN and FBN1. Interacts with EFEMP2 with moderate affinity. Interacts with LOXL1. N-glycosylated.

The protein resides in the secreted. Its subcellular location is the extracellular space. It localises to the extracellular matrix. In terms of biological role, essential for elastic fiber formation, is involved in the assembly of continuous elastin (ELN) polymer and promotes the interaction of microfibrils and ELN. Stabilizes and organizes elastic fibers in the skin, lung and vasculature. Promotes adhesion of endothelial cells through interaction of integrins and the RGD motif. Vascular ligand for integrin receptors which may play a role in vascular development and remodeling. May act as an adapter that mediates the interaction between FBN1 and ELN. This chain is Fibulin-5 (FBLN5), found in Pongo abelii (Sumatran orangutan).